The primary structure comprises 136 residues: Histone H2A (136 aa).

The span at 1–11 (MTGGGKSGGKA) shows a compositional bias: gly residues. Residues 1 to 24 (MTGGGKSGGKASGSKNAQSRSSKA) are disordered. Lys6 and Lys10 each carry N6-acetyllysine. An N5-methylglutamine modification is found at Gln107. At Ser133 the chain carries Phosphoserine. A [ST]-Q motif motif is present at residues 133–134 (SQ).

It belongs to the histone H2A family. As to quaternary structure, the nucleosome is a histone octamer containing two molecules each of H2A, H2B, H3 and H4 assembled in one H3-H4 heterotetramer and two H2A-H2B heterodimers. The octamer wraps approximately 147 bp of DNA. In terms of processing, phosphorylated to form H2AS128ph (gamma-H2A) in response to DNA double-strand breaks (DSBs) generated by exogenous genotoxic agents and by stalled replication forks. Phosphorylation is dependent on the DNA damage checkpoint kinases MEC1/ATR and TEL1/ATM, spreads on either side of a detected DSB site and may mark the surrounding chromatin for recruitment of proteins required for DNA damage signaling and repair. Gamma-H2A is removed from the DNA prior to the strand invasion-primer extension step of the repair process and subsequently dephosphorylated. Dephosphorylation is necessary for efficient recovery from the DNA damage checkpoint. Acetylated by ESA1 to form H2AK4ac and H2AK7ac.

The protein resides in the nucleus. Its subcellular location is the chromosome. In terms of biological role, core component of nucleosome which plays a central role in DNA double strand break (DSB) repair. Nucleosomes wrap and compact DNA into chromatin, limiting DNA accessibility to the cellular machineries which require DNA as a template. Histones thereby play a central role in transcription regulation, DNA repair, DNA replication and chromosomal stability. DNA accessibility is regulated via a complex set of post-translational modifications of histones, also called histone code, and nucleosome remodeling. In Pyricularia oryzae (strain Y34) (Rice blast fungus), this protein is Histone H2A (HTA1).